The primary structure comprises 293 residues: 4-hydroxy-tetrahydrodipicolinate synthase (293 aa).

Thr44 is a pyruvate binding site. Tyr132 serves as the catalytic Proton donor/acceptor. Lys161 serves as the catalytic Schiff-base intermediate with substrate. Ile203 lines the pyruvate pocket.

It belongs to the DapA family. In terms of assembly, homotetramer; dimer of dimers.

The protein resides in the cytoplasm. It catalyses the reaction L-aspartate 4-semialdehyde + pyruvate = (2S,4S)-4-hydroxy-2,3,4,5-tetrahydrodipicolinate + H2O + H(+). Its pathway is amino-acid biosynthesis; L-lysine biosynthesis via DAP pathway; (S)-tetrahydrodipicolinate from L-aspartate: step 3/4. In terms of biological role, catalyzes the condensation of (S)-aspartate-beta-semialdehyde [(S)-ASA] and pyruvate to 4-hydroxy-tetrahydrodipicolinate (HTPA). This Persephonella marina (strain DSM 14350 / EX-H1) protein is 4-hydroxy-tetrahydrodipicolinate synthase.